We begin with the raw amino-acid sequence, 724 residues long: Propionyl-CoA carboxylase alpha chain, mitochondrial (724 aa).

In terms of domain architecture, Biotin carboxylation spans 48–495 (KFDKILIANR…TTKYLPEVYP (448 aa)). ATP is bound by residues Lys-163, 195–256 (SRDI…PRHI), Glu-247, and Asn-282. The ATP-grasp domain maps to 167-364 (KKIATAARVS…IVQQMLRVSY (198 aa)). 3 residues coordinate Mg(2+): Glu-322, Glu-335, and Asn-337. Residues Glu-322, Glu-335, and Asn-337 each coordinate Mn(2+). Residue Arg-339 is part of the active site. Residue Phe-395 participates in biotin binding. Positions 649–724 (KAKVDLSTVV…DEGEVLVELE (76 aa)) constitute a Biotinyl-binding domain. An N6-biotinyllysine modification is found at Lys-690.

As to quaternary structure, the holoenzyme is a dodecamer composed of 6 alpha subunits and 6 beta subunits. Interacts with sir-2.2 and sir-2.3. Requires biotin as cofactor. Mg(2+) serves as cofactor. It depends on Mn(2+) as a cofactor. In terms of processing, the biotin cofactor is covalently attached to the C-terminal biotinyl-binding domain and is required for the catalytic activity.

Its subcellular location is the mitochondrion matrix. It carries out the reaction propanoyl-CoA + hydrogencarbonate + ATP = (S)-methylmalonyl-CoA + ADP + phosphate + H(+). The catalysed reaction is butanoyl-CoA + hydrogencarbonate + ATP = (2S)-ethylmalonyl-CoA + ADP + phosphate + H(+). The protein operates within metabolic intermediate metabolism; propanoyl-CoA degradation; succinyl-CoA from propanoyl-CoA: step 1/3. In terms of biological role, this is one of the 2 subunits of the biotin-dependent propionyl-CoA carboxylase (PCC), a mitochondrial enzyme involved in the catabolism of odd chain fatty acids, branched-chain amino acids isoleucine, threonine, methionine, and valine and other metabolites. Propionyl-CoA carboxylase catalyzes the carboxylation of propionyl-CoA/propanoyl-CoA to D-methylmalonyl-CoA/(S)-methylmalonyl-CoA. Within the holoenzyme, the alpha subunit catalyzes the ATP-dependent carboxylation of the biotin carried by the biotin carboxyl carrier (BCC) domain, while the beta subunit then transfers the carboxyl group from carboxylated biotin to propionyl-CoA. Propionyl-CoA carboxylase also significantly acts on butyryl-CoA/butanoyl-CoA, which is converted to ethylmalonyl-CoA/(2S)-ethylmalonyl-CoA. Other alternative minor substrates include (2E)-butenoyl-CoA/crotonoyl-CoA. The protein is Propionyl-CoA carboxylase alpha chain, mitochondrial (pcca-1) of Caenorhabditis elegans.